Here is a 511-residue protein sequence, read N- to C-terminus: Chromosomal replication initiator protein DnaA (511 aa).

The tract at residues 1-87 (MSVELWQQCV…IGSKRSSAPR (87 aa)) is domain I, interacts with DnaA modulators. The domain II stretch occupies residues 87–174 (RAAPNAPLAA…QVEGALKHTS (88 aa)). The tract at residues 133–160 (VATHDEPSRDSFDPMAGASSQQAPARAE) is disordered. Residues 134 to 144 (ATHDEPSRDSF) show a composition bias toward basic and acidic residues. The tract at residues 175–391 (YLNRTFTFEN…GALKRVIAHS (217 aa)) is domain III, AAA+ region. Gly219, Gly221, Lys222, and Thr223 together coordinate ATP. The domain IV, binds dsDNA stretch occupies residues 392-511 (HFMGRDITIE…YKNLLRTLTT (120 aa)).

This sequence belongs to the DnaA family. Oligomerizes as a right-handed, spiral filament on DNA at oriC.

The protein resides in the cytoplasm. In terms of biological role, plays an essential role in the initiation and regulation of chromosomal replication. ATP-DnaA binds to the origin of replication (oriC) to initiate formation of the DNA replication initiation complex once per cell cycle. Binds the DnaA box (a 9 base pair repeat at the origin) and separates the double-stranded (ds)DNA. Forms a right-handed helical filament on oriC DNA; dsDNA binds to the exterior of the filament while single-stranded (ss)DNA is stabiized in the filament's interior. The ATP-DnaA-oriC complex binds and stabilizes one strand of the AT-rich DNA unwinding element (DUE), permitting loading of DNA polymerase. After initiation quickly degrades to an ADP-DnaA complex that is not apt for DNA replication. Binds acidic phospholipids. The protein is Chromosomal replication initiator protein DnaA of Pseudomonas syringae pv. tomato (strain ATCC BAA-871 / DC3000).